Reading from the N-terminus, the 116-residue chain is Large ribosomal subunit protein bL17 (116 aa).

Belongs to the bacterial ribosomal protein bL17 family. As to quaternary structure, part of the 50S ribosomal subunit. Contacts protein L32.

This is Large ribosomal subunit protein bL17 from Synechocystis sp. (strain ATCC 27184 / PCC 6803 / Kazusa).